The chain runs to 135 residues: uncharacterized protein (135 aa).

Positions 8–123 constitute a HotDog ACOT-type domain; sequence PKGIIVLKTL…IFIYVAINKT (116 aa).

The protein belongs to the acyl coenzyme A hydrolase family.

This is an uncharacterized protein from Buchnera aphidicola subsp. Acyrthosiphon pisum (strain APS) (Acyrthosiphon pisum symbiotic bacterium).